The sequence spans 258 residues: Hydroxyacylglutathione hydrolase cytoplasmic (258 aa).

2 residues coordinate Zn(2+): H54 and H56. D58 and H59 together coordinate Fe cation. Residues H112 and D135 each coordinate Zn(2+). D135 provides a ligand contact to Fe cation. Residues 144-146 (KFF) and 174-176 (HEY) each bind substrate. Fe cation is bound at residue H174.

Belongs to the metallo-beta-lactamase superfamily. Glyoxalase II family. In terms of assembly, homodimer. Fe(2+) is required as a cofactor. Zn(2+) serves as cofactor. It depends on Fe(3+) as a cofactor. As to expression, mainly expressed in flowers and flower buds. Also detected in roots and leaves.

The protein localises to the cytoplasm. The enzyme catalyses an S-(2-hydroxyacyl)glutathione + H2O = a 2-hydroxy carboxylate + glutathione + H(+). Its pathway is secondary metabolite metabolism; methylglyoxal degradation; (R)-lactate from methylglyoxal: step 2/2. Thiolesterase that catalyzes the hydrolysis of S-D-lactoyl-glutathione to form glutathione and D-lactic acid. This Arabidopsis thaliana (Mouse-ear cress) protein is Hydroxyacylglutathione hydrolase cytoplasmic (GLX2-2).